We begin with the raw amino-acid sequence, 220 residues long: MAILFAVVARGTTILAKHAWCGGNFLEVTEQILAKIPSENNKLTYSHGNYLFHYICQDRIVYLCITDDDFERSRAFNFLNEIKKRFQTTYGSRAQTALPYAMNSEFSSVLAAQLKHHSENKGLDKVMETQAQVDELKGIMVRNIDLVAQRGERLELLIDKTENLVDSSVTFKTTSRNLARAMCMKNLKLTIIIIIISVVFIYIIVSPLCGGFTWPNCVKK.

Position 2 is an N-acetylalanine (A2). Residues 2–188 (AILFAVVARG…ARAMCMKNLK (187 aa)) are Cytoplasmic-facing. A Longin domain is found at 7 to 110 (VVARGTTILA…AMNSEFSSVL (104 aa)). Positions 125–185 (KVMETQAQVD…RNLARAMCMK (61 aa)) constitute a v-SNARE coiled-coil homology domain. Residues S167 and S168 each carry the phosphoserine modification. The helical; Anchor for type IV membrane protein transmembrane segment at 189–209 (LTIIIIIISVVFIYIIVSPLC) threads the bilayer. Residues 210–220 (GGFTWPNCVKK) lie on the Vesicular side of the membrane.

The protein belongs to the synaptobrevin family. Component of the SNARE complex composed of STX4, SNAP23 and VAMP7 that binds SYT7 during lysosomal exocytosis. Component of the SNARE complex composed of STX7, STX8, VAMP7 and VTI1B that is required for heterotypic fusion of late endosomes with lysosomes. May interact with STX17. Interacts with PICALM. Interacts with RAB21.

It is found in the cytoplasmic vesicle. The protein resides in the secretory vesicle membrane. Its subcellular location is the golgi apparatus. The protein localises to the trans-Golgi network membrane. It localises to the late endosome membrane. It is found in the lysosome membrane. The protein resides in the endoplasmic reticulum membrane. Its subcellular location is the phagosome membrane. The protein localises to the synapse. It localises to the synaptosome. Involved in the targeting and/or fusion of transport vesicles to their target membrane during transport of proteins from the early endosome to the lysosome. Required for heterotypic fusion of late endosomes with lysosomes and homotypic lysosomal fusion. Required for calcium regulated lysosomal exocytosis. Involved in the export of chylomicrons from the endoplasmic reticulum to the cis Golgi. Required for exocytosis of mediators during eosinophil and neutrophil degranulation, and target cell killing by natural killer cells. Required for focal exocytosis of late endocytic vesicles during phagosome formation. This chain is Vesicle-associated membrane protein 7 (VAMP7), found in Bos taurus (Bovine).